Consider the following 298-residue polypeptide: TLR adapter interacting with SLC15A4 on the lysosome (298 aa).

The pLxIS motif signature appears at 287-291; it reads SLHIS. Position 291 is a phosphoserine (serine 291).

Interacts (via pLxIS motif) with IRF5; leading to IRF5 activation. Interacts with SLC15A4; leading to its recruitment to endolysosome. The phosphorylated pLxIS motif constitutes an IRF5-binding motif, leading to recruitment of the transcription factor IRF5 to induce type-I interferons and other cytokines.

The protein resides in the lysosome membrane. It is found in the endosome membrane. It localises to the nucleus. Its subcellular location is the cytoplasm. Its function is as follows. Innate immune adapter that mediates the recruitment and activation of IRF5 downstream of endolysosomal toll-like receptors TLR7, TLR8 and TLR9. Following recruitment to endolysosome by SLC15A4 downstream of TLR7, TLR8 and TLR9, specifically recruits IRF5 transcription factor via its pLxIS motif, leading to IRF5 activation and subsequent expression of type I interferons. Plays a role in the regulation of endolysosomal pH in immune cells such as B-cells, dendritic cells and monocytes. The protein is TLR adapter interacting with SLC15A4 on the lysosome of Mus musculus (Mouse).